A 392-amino-acid polypeptide reads, in one-letter code: Queuine tRNA-ribosyltransferase (392 aa).

The active-site Proton acceptor is the D93. Residues 93–97 (DSGGY), D147, Q189, and G216 contribute to the substrate site. The segment at 247-253 (GVGAPED) is RNA binding. Residue D266 is the Nucleophile of the active site. The RNA binding; important for wobble base 34 recognition stretch occupies residues 271–275 (TRVAR). The Zn(2+) site is built by C304, C306, C309, and H335.

Belongs to the queuine tRNA-ribosyltransferase family. As to quaternary structure, homodimer. Within each dimer, one monomer is responsible for RNA recognition and catalysis, while the other monomer binds to the replacement base PreQ1. The cofactor is Zn(2+).

It carries out the reaction 7-aminomethyl-7-carbaguanine + guanosine(34) in tRNA = 7-aminomethyl-7-carbaguanosine(34) in tRNA + guanine. It participates in tRNA modification; tRNA-queuosine biosynthesis. Its function is as follows. Catalyzes the base-exchange of a guanine (G) residue with the queuine precursor 7-aminomethyl-7-deazaguanine (PreQ1) at position 34 (anticodon wobble position) in tRNAs with GU(N) anticodons (tRNA-Asp, -Asn, -His and -Tyr). Catalysis occurs through a double-displacement mechanism. The nucleophile active site attacks the C1' of nucleotide 34 to detach the guanine base from the RNA, forming a covalent enzyme-RNA intermediate. The proton acceptor active site deprotonates the incoming PreQ1, allowing a nucleophilic attack on the C1' of the ribose to form the product. After dissociation, two additional enzymatic reactions on the tRNA convert PreQ1 to queuine (Q), resulting in the hypermodified nucleoside queuosine (7-(((4,5-cis-dihydroxy-2-cyclopenten-1-yl)amino)methyl)-7-deazaguanosine). This chain is Queuine tRNA-ribosyltransferase, found in Dehalococcoides mccartyi (strain ATCC BAA-2100 / JCM 16839 / KCTC 5957 / BAV1).